The sequence spans 348 residues: Protein RecA (348 aa).

ATP is bound at residue 66-73 (GPESSGKT).

This sequence belongs to the RecA family.

The protein resides in the cytoplasm. In terms of biological role, can catalyze the hydrolysis of ATP in the presence of single-stranded DNA, the ATP-dependent uptake of single-stranded DNA by duplex DNA, and the ATP-dependent hybridization of homologous single-stranded DNAs. It interacts with LexA causing its activation and leading to its autocatalytic cleavage. The polypeptide is Protein RecA (Neisseria gonorrhoeae (strain NCCP11945)).